A 263-amino-acid polypeptide reads, in one-letter code: 3-methyl-2-oxobutanoate hydroxymethyltransferase (263 aa).

Positions 45 and 84 each coordinate Mg(2+). 3-methyl-2-oxobutanoate is bound by residues 45 to 46 (DS), Asp-84, and Lys-112. A Mg(2+)-binding site is contributed by Glu-114. Catalysis depends on Glu-181, which acts as the Proton acceptor.

It belongs to the PanB family. Homodecamer; pentamer of dimers. Mg(2+) serves as cofactor.

The protein resides in the cytoplasm. The enzyme catalyses 3-methyl-2-oxobutanoate + (6R)-5,10-methylene-5,6,7,8-tetrahydrofolate + H2O = 2-dehydropantoate + (6S)-5,6,7,8-tetrahydrofolate. The protein operates within cofactor biosynthesis; (R)-pantothenate biosynthesis; (R)-pantoate from 3-methyl-2-oxobutanoate: step 1/2. Functionally, catalyzes the reversible reaction in which hydroxymethyl group from 5,10-methylenetetrahydrofolate is transferred onto alpha-ketoisovalerate to form ketopantoate. The protein is 3-methyl-2-oxobutanoate hydroxymethyltransferase of Proteus mirabilis (strain HI4320).